Consider the following 357-residue polypeptide: Gas vesicle ATPase GvpN (357 aa).

Polar residues predominate over residues 22–36; it reads ATSASKNGGRTTPSA. Positions 22–43 are disordered; sequence ATSASKNGGRTTPSALTPRPRS. Residue 72–79 participates in ATP binding; sequence GPAGTGKT.

It belongs to the CbbQ/NirQ/NorQ/GpvN family. In terms of assembly, forms homodimers, probably interacts with other GV proteins including GvpA.

The protein localises to the gas vesicle. Its subcellular location is the cytoplasm. It carries out the reaction ATP + H2O = ADP + phosphate + H(+). Functionally, an ATPase that functions in gas vesicle formation. A minor component of the gas vesicle, also found in soluble extracts. Gas vesicles (GV) are hollow, gas filled proteinaceous nanostructures. During planktonic growth they allow positioning of the organism at a favorable depth for light or nutrient acquisition. In Ancylobacter aquaticus, this protein is Gas vesicle ATPase GvpN.